Consider the following 896-residue polypeptide: C-type lectin domain-containing protein 180 (896 aa).

A signal peptide spans 1–18; that stretch reads MRHLIFTGFVLTLTALEA. The 125-residue stretch at 54–178 folds into the C-type lectin domain; it reads PWGDLYQFRA…CESTSPDHHA (125 aa). N133 is a glycosylation site (N-linked (GlcNAc...) asparagine). C154 and C169 form a disulfide bridge. 2 N-linked (GlcNAc...) asparagine glycosylation sites follow: N221 and N235. Disordered regions lie at residues 243 to 264, 354 to 436, 492 to 519, and 557 to 809; these read STVKFSDSEEETSSEEEESVSK, VKQE…LAPE, EKLENSKKSEEEKEELAKKDQMSTEEQK, and KVKA…TTKP. Acidic residues predominate over residues 250–260; the sequence is SEEETSSEEEE. Basic and acidic residues-rich tracts occupy residues 354-382 and 395-406; these read VKQEKTDEKKVEDKKETLANELNDNKISE and DMPKADIEPPKE. Residues 407 to 426 show a composition bias toward acidic residues; it reads EDCDEEGSGSGSGEEDEKDE. Basic and acidic residues predominate over residues 427–436; the sequence is SSEKIELAPE. Composition is skewed to basic and acidic residues over residues 575–590, 607–663, and 683–692; these read KSAKEGKAEIKEKVGN, QNRE…ETKL, and EEPKSDKDSE. Over residues 727–739 the composition is skewed to low complexity; the sequence is STTTESTTVAVKE. Basic and acidic residues predominate over residues 740 to 768; sequence VPVDEIEKIAKLEAKQHTEDEKVTVETKQ. Over residues 773–809 the composition is skewed to low complexity; the sequence is TPAPTTSEKTSTTAAPSTKPAEETTTTTEAPSTTTKP.

The protein resides in the secreted. The protein is C-type lectin domain-containing protein 180 (clec-180) of Caenorhabditis elegans.